The following is a 222-amino-acid chain: uncharacterized protein (222 aa).

The segment at residues 1–27 (MSFTRRKFVLGMGTVIFFTGSASSLLA) is a signal peptide (tat-type signal). 4Fe-4S ferredoxin-type domains lie at 37–67 (YAMIHDESRCNGCNICARACRKTNHVPAQGS), 83–114 (TQYHFFRQSCQHCEDAPCIDVCPTGASWRDEQ), and 115–144 (GIVRVEKSQCIGCSYCIGACPYQVRYLNPV). Residues Cys-46, Cys-49, Cys-52, Cys-56, Cys-92, Cys-95, Cys-100, Cys-104, Cys-124, Cys-127, Cys-130, Cys-134, Cys-151, Cys-154, Cys-167, and Cys-171 each contribute to the [4Fe-4S] cluster site.

Exported by the Tat system. The position of the signal peptide cleavage has not been experimentally proven. Can also be exported by the Sec system.

This is an uncharacterized protein from Escherichia coli (strain K12).